The sequence spans 356 residues: DNA polymerase IV (356 aa).

Residues 6–186 enclose the UmuC domain; the sequence is IVHIDMDAFY…LPVDAFHGIG (181 aa). Mg(2+) contacts are provided by Asp-10 and Asp-104. Glu-105 is a catalytic residue.

It belongs to the DNA polymerase type-Y family. In terms of assembly, monomer. Mg(2+) is required as a cofactor.

The protein resides in the cytoplasm. The enzyme catalyses DNA(n) + a 2'-deoxyribonucleoside 5'-triphosphate = DNA(n+1) + diphosphate. In terms of biological role, poorly processive, error-prone DNA polymerase involved in untargeted mutagenesis. Copies undamaged DNA at stalled replication forks, which arise in vivo from mismatched or misaligned primer ends. These misaligned primers can be extended by PolIV. Exhibits no 3'-5' exonuclease (proofreading) activity. May be involved in translesional synthesis, in conjunction with the beta clamp from PolIII. The polypeptide is DNA polymerase IV (Gluconobacter oxydans (strain 621H) (Gluconobacter suboxydans)).